The chain runs to 264 residues: Thymidylate synthase (264 aa).

Position 21 (arginine 21) interacts with dUMP. Histidine 51 is a binding site for (6R)-5,10-methylene-5,6,7,8-tetrahydrofolate. 126–127 (RR) contacts dUMP. Cysteine 146 serves as the catalytic Nucleophile. DUMP is bound by residues 166 to 169 (RSCD), asparagine 177, and 207 to 209 (HLY). Aspartate 169 provides a ligand contact to (6R)-5,10-methylene-5,6,7,8-tetrahydrofolate. A (6R)-5,10-methylene-5,6,7,8-tetrahydrofolate-binding site is contributed by alanine 263.

This sequence belongs to the thymidylate synthase family. Bacterial-type ThyA subfamily. In terms of assembly, homodimer.

The protein localises to the cytoplasm. It carries out the reaction dUMP + (6R)-5,10-methylene-5,6,7,8-tetrahydrofolate = 7,8-dihydrofolate + dTMP. It functions in the pathway pyrimidine metabolism; dTTP biosynthesis. Functionally, catalyzes the reductive methylation of 2'-deoxyuridine-5'-monophosphate (dUMP) to 2'-deoxythymidine-5'-monophosphate (dTMP) while utilizing 5,10-methylenetetrahydrofolate (mTHF) as the methyl donor and reductant in the reaction, yielding dihydrofolate (DHF) as a by-product. This enzymatic reaction provides an intracellular de novo source of dTMP, an essential precursor for DNA biosynthesis. This chain is Thymidylate synthase, found in Buchnera aphidicola subsp. Baizongia pistaciae (strain Bp).